We begin with the raw amino-acid sequence, 167 residues long: N5-carboxyaminoimidazole ribonucleotide mutase (167 aa).

Substrate contacts are provided by serine 11, aspartate 14, and arginine 41.

Belongs to the AIR carboxylase family. Class I subfamily.

It carries out the reaction 5-carboxyamino-1-(5-phospho-D-ribosyl)imidazole + H(+) = 5-amino-1-(5-phospho-D-ribosyl)imidazole-4-carboxylate. Its pathway is purine metabolism; IMP biosynthesis via de novo pathway; 5-amino-1-(5-phospho-D-ribosyl)imidazole-4-carboxylate from 5-amino-1-(5-phospho-D-ribosyl)imidazole (N5-CAIR route): step 2/2. Its function is as follows. Catalyzes the conversion of N5-carboxyaminoimidazole ribonucleotide (N5-CAIR) to 4-carboxy-5-aminoimidazole ribonucleotide (CAIR). This Aquifex aeolicus (strain VF5) protein is N5-carboxyaminoimidazole ribonucleotide mutase.